We begin with the raw amino-acid sequence, 167 residues long: MAIRRICELPEPVLRKKAKKVPSIDGSIQTLIDDMIETMNSADGAGLAAPQVGVSLRLVVFREPDTKEATVLINPEIVKKEGQRQVTEGCLSIPGYFGELTRAETVTAKGLDRHGKACRIKGTGIVAQLLEHETEHLDGILYIDHLESEDQLHEIGPDDEMPEEIRE.

Residues cysteine 90 and histidine 132 each coordinate Fe cation. The active site involves glutamate 133. Histidine 136 is a binding site for Fe cation.

It belongs to the polypeptide deformylase family. The cofactor is Fe(2+).

It carries out the reaction N-terminal N-formyl-L-methionyl-[peptide] + H2O = N-terminal L-methionyl-[peptide] + formate. Functionally, removes the formyl group from the N-terminal Met of newly synthesized proteins. Requires at least a dipeptide for an efficient rate of reaction. N-terminal L-methionine is a prerequisite for activity but the enzyme has broad specificity at other positions. This Dehalococcoides mccartyi (strain CBDB1) protein is Peptide deformylase.